Consider the following 295-residue polypeptide: Dual specificity protein phosphatase 15 (295 aa).

Positions 1 to 141 (MTEGVLPGLY…LEEFGWASSQ (141 aa)) constitute a Tyrosine-protein phosphatase domain. Thr-2 carries N-myristoyl glycine lipidation. The Phosphocysteine intermediate role is filled by Cys-85. Over residues 251-270 (SSSCTLSASTERPDGSSTPG) the composition is skewed to polar residues. Positions 251 to 272 (SSSCTLSASTERPDGSSTPGNP) are disordered.

It belongs to the protein-tyrosine phosphatase family. Non-receptor class dual specificity subfamily. In terms of tissue distribution, highly expressed in testis. Expressed in brain; up-regulated in patients with multiple sclerosis gray matter lesions.

The protein localises to the cytoplasm. The protein resides in the cell membrane. The enzyme catalyses O-phospho-L-tyrosyl-[protein] + H2O = L-tyrosyl-[protein] + phosphate. It carries out the reaction O-phospho-L-seryl-[protein] + H2O = L-seryl-[protein] + phosphate. The catalysed reaction is O-phospho-L-threonyl-[protein] + H2O = L-threonyl-[protein] + phosphate. In terms of biological role, may dephosphorylate MAPK13, ATF2, ERBB3, PDGFRB and SNX6. May play a role in the regulation of oligodendrocyte differentiation. May play a role in the regulation of myelin formation. Involved in the regulation of Erk1/2 phosphorylation in Schwann cells; the signaling may be linked to the regulation of myelination. This chain is Dual specificity protein phosphatase 15, found in Homo sapiens (Human).